Here is a 141-residue protein sequence, read N- to C-terminus: Hemoglobin subunit alpha (141 aa).

In terms of domain architecture, Globin spans Val1–Arg141. Ser3 carries the post-translational modification Phosphoserine. An N6-succinyllysine mark is found at Lys7 and Lys11. The residue at position 16 (Lys16) is an N6-acetyllysine; alternate. Lys16 is modified (N6-succinyllysine; alternate). Tyr24 bears the Phosphotyrosine mark. Ser35 carries the phosphoserine modification. At Lys40 the chain carries N6-succinyllysine. At Ser49 the chain carries Phosphoserine. His58 provides a ligand contact to O2. A heme b-binding site is contributed by His87. Ser102 is subject to Phosphoserine. The residue at position 108 (Thr108) is a Phosphothreonine. A phosphoserine mark is found at Ser124 and Ser131. Phosphothreonine occurs at positions 134 and 137. Residue Ser138 is modified to Phosphoserine.

Belongs to the globin family. In terms of assembly, heterotetramer of two alpha chains and two beta chains. Red blood cells.

Its function is as follows. Involved in oxygen transport from the lung to the various peripheral tissues. Functionally, hemopressin acts as an antagonist peptide of the cannabinoid receptor CNR1. Hemopressin-binding efficiently blocks cannabinoid receptor CNR1 and subsequent signaling. The sequence is that of Hemoglobin subunit alpha (HBA) from Saguinus oedipus (Cotton-top tamarin).